The primary structure comprises 511 residues: Cytochrome P450 monooxygenase prhD (511 aa).

Residue Asn7 is glycosylated (N-linked (GlcNAc...) asparagine). A helical membrane pass occupies residues 10 to 30 (GNGMGLLIPLGLSWLIWTILL). Cys444 contributes to the heme binding site. The N-linked (GlcNAc...) asparagine glycan is linked to Asn502.

Belongs to the cytochrome P450 family. The cofactor is heme.

The protein localises to the membrane. It participates in secondary metabolite biosynthesis; terpenoid biosynthesis. Its function is as follows. Cytochrome P450 monooxygenase; part of the gene cluster that mediates the biosynthesis of paraherquonin, a meroterpenoid with a unique, highly congested hexacyclic molecular architecture. The first step of the pathway is the synthesis of 3,5-dimethylorsellinic acid (DMOA) by the polyketide synthase prhL. Synthesis of DMOA is followed by farnesylation by the prenyltransferase prhE, methylesterification by the methyl-transferase prhM, epoxidation of the prenyl chain by the flavin-dependent monooxygenase prhF, and cyclization of the farnesyl moiety by the terpene cyclase prhH, to yield the tetracyclic intermediate, protoaustinoid A. The short chain dehydrogenase prhI then oxidizes the C-3 alcohol group of the terpene cyclase product to transform protoaustinoid A into protoaustinoid B. The FAD-binding monooxygenase prhJ catalyzes the oxidation of protoaustinoid B into preaustinoid A which is further oxidized into preaustinoid A1 by FAD-binding monooxygenase phrK. Finally, prhA leads to berkeleydione via the berkeleyone B intermediate. PrhA is a multifunctional dioxygenase that first desaturates at C5-C6 to form berkeleyone B, followed by rearrangement of the A/B-ring to form the cycloheptadiene moiety in berkeleydione. Berkeleydione serves as the key intermediate for the biosynthesis of paraherquonin as well as many other meroterpenoids. The cytochrome P450 monooxygenases prhB, prhD, and prhN, as well as the isomerase prhC, are probably involved in the late stage of paraherquonin biosynthesis, after the production of berkeleydione. Especially prhC might be a multifunctional enzyme that catalyzes the D-ring expansion via intramolecular methoxy rearrangement, as well as the hydrolysis of the expanded D-ring. This is Cytochrome P450 monooxygenase prhD from Penicillium brasilianum.